Consider the following 490-residue polypeptide: Aspartyl/glutamyl-tRNA(Asn/Gln) amidotransferase subunit B (490 aa).

The protein belongs to the GatB/GatE family. GatB subfamily. In terms of assembly, heterotrimer of A, B and C subunits.

The catalysed reaction is L-glutamyl-tRNA(Gln) + L-glutamine + ATP + H2O = L-glutaminyl-tRNA(Gln) + L-glutamate + ADP + phosphate + H(+). It carries out the reaction L-aspartyl-tRNA(Asn) + L-glutamine + ATP + H2O = L-asparaginyl-tRNA(Asn) + L-glutamate + ADP + phosphate + 2 H(+). Its function is as follows. Allows the formation of correctly charged Asn-tRNA(Asn) or Gln-tRNA(Gln) through the transamidation of misacylated Asp-tRNA(Asn) or Glu-tRNA(Gln) in organisms which lack either or both of asparaginyl-tRNA or glutaminyl-tRNA synthetases. The reaction takes place in the presence of glutamine and ATP through an activated phospho-Asp-tRNA(Asn) or phospho-Glu-tRNA(Gln). The sequence is that of Aspartyl/glutamyl-tRNA(Asn/Gln) amidotransferase subunit B from Prochlorococcus marinus (strain AS9601).